The following is a 751-amino-acid chain: Kelch-like protein 1 (751 aa).

Low complexity-rich tracts occupy residues 25–36 and 74–90; these read PSPASSSPAGGS and SSSSSSSSSSSSSASSS. Disordered stretches follow at residues 25–54, 69–98, and 157–184; these read PSPASSSPAGGSCLQQDSGGGSFEHWGPSQ, FWKKPSSSSSSSSSSSSSASSSPFNPLNGT, and SSIQATGEGCGHRLTSTNHSLTPQSDLD. Polar residues predominate over residues 170-184; the sequence is LTSTNHSLTPQSDLD. The BTB domain occupies 215-282; that stretch reads CDVILIVGNR…AYTGCLELKE (68 aa). Kelch repeat units follow at residues 463-509, 510-556, 558-603, 604-650, 652-703, and 704-750; these read TLYA…VIDD, KLFV…VLEG, IYAV…ALNG, KLYS…TCDG, LYAV…LLGD, and RLYA…VIKQ.

In terms of tissue distribution, highly expressed in brain.

Its subcellular location is the cytoplasm. The protein localises to the cytoskeleton. Its function is as follows. May play a role in organizing the actin cytoskeleton of the brain cells. In Mus musculus (Mouse), this protein is Kelch-like protein 1 (Klhl1).